The primary structure comprises 219 residues: Tegument protein UL14 (219 aa).

The segment at 161–219 is disordered; the sequence is ANGPSRIGSHPTYTPTPTGPPGAPAAPLSRTPPSPAPPTGPATDPASASGFARDYPDGE. Positions 177–200 are enriched in pro residues; sequence PTGPPGAPAAPLSRTPPSPAPPTG.

It belongs to the alphaherpesvirinae HHV-1 UL14 protein family. As to quaternary structure, interacts with UL51. Phosphorylated.

The protein localises to the virion tegument. It localises to the host cytoplasm. It is found in the host nucleus. In terms of biological role, contributes to the nuclear transport of the viral transcriptional activator VP16 during the early phase of infection. Therefore, participates indirectly in the regulation of the immediate-early gene expression. Additionally, seems to be important for efficient nuclear targeting of capsids. The UL51-UL14 complex regulates final viral envelopment for efficient viral replication. This chain is Tegument protein UL14, found in Human herpesvirus 1 (strain 17) (HHV-1).